Reading from the N-terminus, the 414-residue chain is Phospholipid-transporting ATPase accessory subunit LEM3 (414 aa).

The interval 1 to 50 (MVNFDLGQVGEVFRRKDKGAIVSGDNPEEEEDVDASEFEEDEVKPVRTKN) is required for localization to the plasma membrane. At 1–74 (MVNFDLGQVG…AINPVLTPRT (74 aa)) the chain is on the cytoplasmic side. Residues 20 to 52 (AIVSGDNPEEEEDVDASEFEEDEVKPVRTKNRR) are disordered. Over residues 26–42 (NPEEEEDVDASEFEEDE) the composition is skewed to acidic residues. S36 carries the phosphoserine modification. The helical transmembrane segment at 75–95 (VLPLYLLIAVVFVIVGGCILA) threads the bilayer. Over 96–372 (QNSKVDEVTI…HGSHLGGRNP (277 aa)) the chain is Extracellular. 2 disulfide bridges follow: C110/C159 and C216/C231. N113 carries an N-linked (GlcNAc...) asparagine glycan. N-linked (GlcNAc...) asparagine glycans are attached at residues N240, N256, N279, N298, and N332. A helical membrane pass occupies residues 373–393 (FLGIVYLIGGCICAAMALILL). Residues 394–414 (TFWLFGGRKIADASSLSWNMK) lie on the Cytoplasmic side of the membrane. A required for localization to the plasma membrane region spans residues 400–414 (GRKIADASSLSWNMK).

Belongs to the CDC50/LEM3 family. In terms of assembly, component of a flippase complex consisting of DNF1 or DNF2 and LEM3. Interacts with DNF1; the interaction is direct and required for their mutual export from the endoplasmic reticulum. Interacts with DNF2; the interaction is direct and required for their mutual export from the endoplasmic reticulum.

The protein resides in the cell membrane. In terms of biological role, accessory component of a P4-ATPase flippase complex which catalyzes the hydrolysis of ATP coupled to the transport of glucosylceramide, phosphatidylcholine, phosphatidylethanolamine, and small amounts of phosphatidylserine from the lumenal to the cytosolic leaflet of the cell membrane and ensures the maintenance of asymmetric distribution of phospholipids. Contributes to substrate binding and specificity of the P4-ATPase catalytic subunit. This Saccharomyces cerevisiae (strain ATCC 204508 / S288c) (Baker's yeast) protein is Phospholipid-transporting ATPase accessory subunit LEM3.